Reading from the N-terminus, the 466-residue chain is MTQRVRTRFAPSPTGFIHLGNIRSALYPWAFARRMQGDFILRIEDTDVERSSQEAVDVILESMAWLELDIDEGPFYQMQRMDRYREVVAQMVEAGLAYRCYMSTAELDALREAQRERGEKPRYNGFWRPEPGKVLPEPPAGVDPVIRFKNPIGGSVVWDDAVKGRIEISNDELDDLVIARPDGTPTYNFCVVVDDLDMRITHVIRGDDHVNNTPRQINIIRALGGTPPVYAHLPTVLNEQGEKMSKRHGAMSVTGYRDEGYLPEAVLNYLARLGWAHGDAEIFSREQFVEWFDLEHLGKSPAQYNPEKLAWLNNHYIKVGDNQRLATLTQPFIEALGGKVEGADLVGVIALVKDRANTLKEVAQAALLFYRGEPQADAALKAEHLTPEIQPALAALSARLGALPSWTREEISATFKAVLAEFGLKMPKLAMPVRLLVAGQLQTPSIDAVLELFGRDTVLRRLAAAA.

The short motif at 11 to 21 is the 'HIGH' region element; that stretch reads PSPTGFIHLGN. The 'KMSKS' region motif lies at 243–247; it reads KMSKR. Position 246 (Lys246) interacts with ATP.

This sequence belongs to the class-I aminoacyl-tRNA synthetase family. Glutamate--tRNA ligase type 1 subfamily. As to quaternary structure, monomer.

Its subcellular location is the cytoplasm. The enzyme catalyses tRNA(Glu) + L-glutamate + ATP = L-glutamyl-tRNA(Glu) + AMP + diphosphate. Catalyzes the attachment of glutamate to tRNA(Glu) in a two-step reaction: glutamate is first activated by ATP to form Glu-AMP and then transferred to the acceptor end of tRNA(Glu). The chain is Glutamate--tRNA ligase from Cupriavidus taiwanensis (strain DSM 17343 / BCRC 17206 / CCUG 44338 / CIP 107171 / LMG 19424 / R1) (Ralstonia taiwanensis (strain LMG 19424)).